Consider the following 62-residue polypeptide: Large ribosomal subunit protein bL28 (62 aa).

Belongs to the bacterial ribosomal protein bL28 family.

This Streptococcus equi subsp. equi (strain 4047) protein is Large ribosomal subunit protein bL28.